The chain runs to 292 residues: Glutamyl-Q tRNA(Asp) synthetase (292 aa).

L-glutamate is bound by residues 9–13 (RFAPS) and glutamate 45. The short motif at 12-22 (PSPSGPLHAGS) is the 'HIGH' region element. Zn(2+) contacts are provided by cysteine 99, cysteine 101, tyrosine 121, and cysteine 125. L-glutamate-binding residues include tyrosine 184 and arginine 202. A 'KMSKS' region motif is present at residues 240–244 (KLSKQ). Lysine 243 contributes to the ATP binding site.

The protein belongs to the class-I aminoacyl-tRNA synthetase family. GluQ subfamily. The cofactor is Zn(2+).

Catalyzes the tRNA-independent activation of glutamate in presence of ATP and the subsequent transfer of glutamate onto a tRNA(Asp). Glutamate is transferred on the 2-amino-5-(4,5-dihydroxy-2-cyclopenten-1-yl) moiety of the queuosine in the wobble position of the QUC anticodon. The chain is Glutamyl-Q tRNA(Asp) synthetase from Verminephrobacter eiseniae (strain EF01-2).